A 106-amino-acid polypeptide reads, in one-letter code: Large ribosomal subunit protein eL30 (106 aa).

It belongs to the eukaryotic ribosomal protein eL30 family. Component of the large ribosomal subunit. Mature ribosomes consist of a small (40S) and a large (60S) subunit. The 40S subunit contains about 32 different proteins and 1 molecule of RNA (18S). The 60S subunit contains 45 different proteins and 3 molecules of RNA (25S, 5.8S and 5S).

Its subcellular location is the cytoplasm. Functionally, component of the ribosome, a large ribonucleoprotein complex responsible for the synthesis of proteins in the cell. The small ribosomal subunit (SSU) binds messenger RNAs (mRNAs) and translates the encoded message by selecting cognate aminoacyl-transfer RNA (tRNA) molecules. The large subunit (LSU) contains the ribosomal catalytic site termed the peptidyl transferase center (PTC), which catalyzes the formation of peptide bonds, thereby polymerizing the amino acids delivered by tRNAs into a polypeptide chain. The nascent polypeptides leave the ribosome through a tunnel in the LSU and interact with protein factors that function in enzymatic processing, targeting, and the membrane insertion of nascent chains at the exit of the ribosomal tunnel. The sequence is that of Large ribosomal subunit protein eL30 from Candida albicans (strain SC5314 / ATCC MYA-2876) (Yeast).